The sequence spans 452 residues: MQRRIMGIETEFGVTCTFHGHRRLSPDEVARYLFRRVVSWGRSSNVFLRNGARLYLDVGSHPEYATAECDNLIQLVTHDRAGERVLEDLLIDAEQRLADEGIGGDIYLFKNNTDSAGNSYGCHENYLIVRAGEFSRISDVLLPFLVTRQLICGAGKVLQTPKAATFCLSQRAEHIWEGVSSATTRSRPIINTRDEPHADAEKYRRLHVIVGDSNMCEATTMLKVGTASLVLEMIEAGVPFRDFSLDNPIRAIREVSHDLTGRRPVRLAGGRQASALDIQREYYSRAVEYLQSREPNTQIEQVVDLWGRQLDAVESQDFAKVDTEIDWVIKRKLFQRYQDRYNMELSDPKISQLDLAYHDIKRGRGVFDLLQRKGLAARITTDEEIDAAVTTPPQTTRAKLRGEFISAAQEAGRDFTVDWVHLKLNDQAQRTVLCKDPFRSVDERVKRLIASM.

Residue glutamate 9 coordinates Mg(2+). Arginine 53 is a binding site for ATP. Tyrosine 55 serves as a coordination point for Mg(2+). Aspartate 57 acts as the Proton acceptor in catalysis. Glutamate 63 provides a ligand contact to Mg(2+). 2 residues coordinate ATP: threonine 66 and tryptophan 419.

Belongs to the Pup ligase/Pup deamidase family. Pup-conjugating enzyme subfamily. In terms of processing, pupylated at an undetermined lysine residue by the prokaryotic ubiquitin-like protein Pup, which leads to its degradation by the proteasome and thereby constitutes a negative auto-regulation.

It catalyses the reaction ATP + [prokaryotic ubiquitin-like protein]-L-glutamate + [protein]-L-lysine = ADP + phosphate + N(6)-([prokaryotic ubiquitin-like protein]-gamma-L-glutamyl)-[protein]-L-lysine.. It functions in the pathway protein degradation; proteasomal Pup-dependent pathway. The protein operates within protein modification; protein pupylation. Functionally, catalyzes the covalent attachment of the prokaryotic ubiquitin-like protein modifier Pup to the proteasomal substrate proteins, thereby targeting them for proteasomal degradation. This tagging system is termed pupylation. The ligation reaction likely involves the side-chain carboxylate of the C-terminal glutamate of Pup and the side-chain amino group of a substrate lysine. The protein is Pup--protein ligase (pafA) of Mycolicibacterium smegmatis (strain ATCC 700084 / mc(2)155) (Mycobacterium smegmatis).